We begin with the raw amino-acid sequence, 390 residues long: GTPase Obg (390 aa).

In terms of domain architecture, Obg spans 1 to 159; the sequence is MKFVDEAVIR…RHLRLELLLL (159 aa). The segment at 22-42 is disordered; it reads SFRTEKYVPRGGPDGGDGGDG. The segment covering 33-42 has biased composition (gly residues); that stretch reads GPDGGDGGDG. The region spanning 160–333 is the OBG-type G domain; it reads ADVGMLGLPN…LTYNLMTTIE (174 aa). Residues 166–173, 191–195, 213–216, 283–286, and 314–316 each bind GTP; these read GLPNAGKS, FTTLI, DIPG, NKVD, and SAL. Mg(2+) contacts are provided by Ser173 and Thr193.

Belongs to the TRAFAC class OBG-HflX-like GTPase superfamily. OBG GTPase family. In terms of assembly, monomer. Mg(2+) serves as cofactor.

It is found in the cytoplasm. Functionally, an essential GTPase which binds GTP, GDP and possibly (p)ppGpp with moderate affinity, with high nucleotide exchange rates and a fairly low GTP hydrolysis rate. Plays a role in control of the cell cycle, stress response, ribosome biogenesis and in those bacteria that undergo differentiation, in morphogenesis control. The polypeptide is GTPase Obg (Photobacterium profundum (strain SS9)).